The primary structure comprises 291 residues: Polyamine aminopropyltransferase (291 aa).

One can recognise a PABS domain in the interval 5-245; it reads PGPVSLIEPL…YAVNYIIGSL (241 aa). Residue Q36 participates in S-methyl-5'-thioadenosine binding. Positions 67 and 91 each coordinate spermidine. S-methyl-5'-thioadenosine-binding positions include D111 and 143-144; that span reads DG. D164 acts as the Proton acceptor in catalysis.

It belongs to the spermidine/spermine synthase family. Homodimer or homotetramer.

The protein resides in the cytoplasm. It catalyses the reaction S-adenosyl 3-(methylsulfanyl)propylamine + putrescine = S-methyl-5'-thioadenosine + spermidine + H(+). The protein operates within amine and polyamine biosynthesis; spermidine biosynthesis; spermidine from putrescine: step 1/1. Catalyzes the irreversible transfer of a propylamine group from the amino donor S-adenosylmethioninamine (decarboxy-AdoMet) to putrescine (1,4-diaminobutane) to yield spermidine. The sequence is that of Polyamine aminopropyltransferase from Pyrobaculum islandicum (strain DSM 4184 / JCM 9189 / GEO3).